The following is a 436-amino-acid chain: Aminopeptidase C (436 aa).

Active-site residues include cysteine 68, histidine 356, and asparagine 378.

Belongs to the peptidase C1 family. Homohexamer.

The enzyme catalyses Inactivates bleomycin B2 (a cytotoxic glycometallopeptide) by hydrolysis of a carboxyamide bond of beta-aminoalanine, but also shows general aminopeptidase activity. The specificity varies somewhat with source, but amino acid arylamides of Met, Leu and Ala are preferred.. Functionally, hydrolyzes naphthylamide-substituted amino acids as well as di- and tripeptides in which the half-cystine residue is involved in a disulfide loop, notably in oxytocin and vasopressin. Also has a bleomycin hydrolase activity. This is Aminopeptidase C (pepC) from Lactococcus lactis subsp. cremoris (Streptococcus cremoris).